Here is a 131-residue protein sequence, read N- to C-terminus: Profilin-2 (131 aa).

Belongs to the profilin family. As to quaternary structure, occurs in many kinds of cells as a complex with monomeric actin in a 1:1 ratio.

The protein localises to the cytoplasm. Its subcellular location is the cytoskeleton. In terms of biological role, binds to actin and affects the structure of the cytoskeleton. At high concentrations, profilin prevents the polymerization of actin, whereas it enhances it at low concentrations. By binding to PIP2, it inhibits the formation of IP3 and DG. The sequence is that of Profilin-2 from Malus domestica (Apple).